The following is a 353-amino-acid chain: Polyprenal reductase 2 (353 aa).

6 helical membrane passes run Pro-11–Ile-31, Phe-78–Phe-98, Met-175–Ala-195, Pro-234–Leu-254, Tyr-291–Glu-308, and Trp-313–Leu-335.

This sequence belongs to the steroid 5-alpha reductase family. Polyprenal reductase subfamily.

It is found in the cell membrane. It catalyses the reaction a di-trans,poly-cis-dolichal + NADP(+) = a di-trans,poly-cis-polyprenal + NADPH + H(+). The protein operates within protein modification; protein glycosylation. Plays a key role in early steps of protein N-linked glycosylation by being involved in the conversion of polyprenol into dolichol. Acts as a polyprenal reductase that mediates the reduction of polyprenal into dolichal in a NADP-dependent mechanism. Dolichols are required for the synthesis of dolichol-linked monosaccharides and the oligosaccharide precursor used for N-glycosylation. This chain is Polyprenal reductase 2, found in Oryza sativa subsp. indica (Rice).